A 274-amino-acid chain; its full sequence is Membrane protein insertase YidC 2 (274 aa).

An N-terminal signal peptide occupies residues 1-20 (MKKKLKLTSLLGLSLLIMTA). Residue Cys21 is the site of N-palmitoyl cysteine attachment. A lipid anchor (S-diacylglycerol cysteine) is attached at Cys21. The next 4 membrane-spanning stretches (helical) occupy residues 56–76 (ISIG…LLPV), 128–148 (SDSL…FQAL), 167–187 (VDTT…STWL), and 205–225 (GIPV…ALYW).

This sequence belongs to the OXA1/ALB3/YidC family. Type 2 subfamily.

It localises to the cell membrane. Required for the insertion and/or proper folding and/or complex formation of integral membrane proteins into the membrane. Involved in integration of membrane proteins that insert both dependently and independently of the Sec translocase complex, as well as at least some lipoproteins. This Streptococcus pneumoniae serotype 4 (strain ATCC BAA-334 / TIGR4) protein is Membrane protein insertase YidC 2.